A 64-amino-acid chain; its full sequence is Large ribosomal subunit protein eL37 (64 aa).

Zn(2+) is bound by residues C20, C23, C35, and C38. Residues 20-38 (CRRCGRRSFHVRKKVCAAC) form a C4-type zinc finger.

Belongs to the eukaryotic ribosomal protein eL37 family. It depends on Zn(2+) as a cofactor.

Functionally, binds to the 23S rRNA. This Methanococcus maripaludis (strain C5 / ATCC BAA-1333) protein is Large ribosomal subunit protein eL37.